Consider the following 645-residue polypeptide: Chaperone protein DnaK (645 aa).

The residue at position 200 (Thr-200) is a Phosphothreonine; by autocatalysis. Residues Ala-603–Lys-645 are disordered. Positions Asp-609 to Gly-623 are enriched in low complexity. The span at Pro-625–Lys-645 shows a compositional bias: basic and acidic residues.

It belongs to the heat shock protein 70 family.

Acts as a chaperone. This chain is Chaperone protein DnaK, found in Anaplasma marginale (strain St. Maries).